A 510-amino-acid polypeptide reads, in one-letter code: MYAFPTTRIAPRRKQPKCIKPPKCTSKYDIKFKDIAIYILERKMGASRRYFLMELARKKGFRVEPDLSEYVTHVVSEKNSGAEVLEWLQAKKAGSIPNVAILDISWFTDCMGAGQPVEIERKHRLTLQKICVCKSPSPVVPSRVGVSQYACQRKTTLDNKNTLFTDAFEILAENYEFRENERSCLSFRQAASVLKSLTFTIAGMADVDGLPGFGDHIRAVIEDLIEDGESSKVSEVLNDEVYRSLKLFTTIFGVGLRTAEKWHRLGIRTLEEIKSNENLKFSKMQIAGLQHYEDILGGVRKAEADAVAMVVRDAVWTFLPDAVVTLTGGFRRGNKTGHDVDMLITSPIQGKEKELLHKVINLWKKQDLLLCHTIHESTMDEDNLPSKSVNLLDHFQKCFAILKSNQHRGEISSCDGPHDSRERGKRIWKAIRVDLVFCPFEQYAFALLGWTGSRQFERDLRRYASHEKKMMIDNHALYDKTKRVFVKCESEEEIFGHLGLEYIDPVERNA.

Positions 11–17 (PRRKQPK) match the Nuclear localization signal motif. Residues 27–124 (KYDIKFKDIA…QPVEIERKHR (98 aa)) enclose the BRCT domain. Positions 254 to 258 (VGLRT) are involved in DNA binding. Residues 329–334 (GFRRGN) and 338–341 (HDVD) each bind a 2'-deoxyribonucleoside 5'-triphosphate. Mg(2+) is bound by residues D339, D341, and D434. 449–450 (GW) is a binding site for a 2'-deoxyribonucleoside 5'-triphosphate.

It belongs to the DNA polymerase type-X family. Requires Mg(2+) as cofactor.

Its subcellular location is the nucleus. The enzyme catalyses DNA(n) + a 2'-deoxyribonucleoside 5'-triphosphate = DNA(n+1) + diphosphate. Functionally, template-independent DNA polymerase which catalyzes the random addition of deoxynucleoside 5'-triphosphate to the 3'-end of a DNA initiator. One of the in vivo functions of this enzyme is the addition of nucleotides at the junction (N region) of rearranged Ig heavy chain and T-cell receptor gene segments during the maturation of B- and T-cells. This chain is DNA nucleotidylexotransferase (DNTT), found in Ambystoma mexicanum (Axolotl).